A 440-amino-acid polypeptide reads, in one-letter code: Ribosomal protein uS12 methylthiotransferase RimO (440 aa).

Residues 1-117 (MKIFFISLGC…ITEVIDKVLG (117 aa)) form the MTTase N-terminal domain. The [4Fe-4S] cluster site is built by C10, C46, C80, C154, C158, and C161. The 231-residue stretch at 140-370 (TTGGYYSFLK…MEIQQGIAFE (231 aa)) folds into the Radical SAM core domain. The region spanning 373 to 440 (ESMVGRKLKV…KEYDLIGTAE (68 aa)) is the TRAM domain.

It belongs to the methylthiotransferase family. RimO subfamily. The cofactor is [4Fe-4S] cluster.

It localises to the cytoplasm. It catalyses the reaction L-aspartate(89)-[ribosomal protein uS12]-hydrogen + (sulfur carrier)-SH + AH2 + 2 S-adenosyl-L-methionine = 3-methylsulfanyl-L-aspartate(89)-[ribosomal protein uS12]-hydrogen + (sulfur carrier)-H + 5'-deoxyadenosine + L-methionine + A + S-adenosyl-L-homocysteine + 2 H(+). Functionally, catalyzes the methylthiolation of an aspartic acid residue of ribosomal protein uS12. This is Ribosomal protein uS12 methylthiotransferase RimO from Lachnoclostridium phytofermentans (strain ATCC 700394 / DSM 18823 / ISDg) (Clostridium phytofermentans).